Reading from the N-terminus, the 161-residue chain is Phosphopantetheine adenylyltransferase (161 aa).

Threonine 9 is a substrate binding site. Residues threonine 9–phenylalanine 10 and histidine 17 contribute to the ATP site. Substrate contacts are provided by lysine 41, leucine 73, and arginine 87. Residues glycine 88–arginine 90, glutamate 98, and tyrosine 123–threonine 129 each bind ATP.

It belongs to the bacterial CoaD family. In terms of assembly, homohexamer. Mg(2+) serves as cofactor.

The protein resides in the cytoplasm. The catalysed reaction is (R)-4'-phosphopantetheine + ATP + H(+) = 3'-dephospho-CoA + diphosphate. Its pathway is cofactor biosynthesis; coenzyme A biosynthesis; CoA from (R)-pantothenate: step 4/5. Its function is as follows. Reversibly transfers an adenylyl group from ATP to 4'-phosphopantetheine, yielding dephospho-CoA (dPCoA) and pyrophosphate. This Cupriavidus pinatubonensis (strain JMP 134 / LMG 1197) (Cupriavidus necator (strain JMP 134)) protein is Phosphopantetheine adenylyltransferase.